A 167-amino-acid polypeptide reads, in one-letter code: Lipoprotein signal peptidase (167 aa).

The next 3 membrane-spanning stretches (helical) occupy residues 10 to 30, 68 to 88, and 98 to 118; these read LIWL…KAWV, WQMW…TFWL, and SALP…DRFL. Catalysis depends on residues D124 and D142. The helical transmembrane segment at 138-158 threads the bilayer; the sequence is FNLADSAIVAGAIGIGLLSLF.

This sequence belongs to the peptidase A8 family.

It localises to the cell inner membrane. It carries out the reaction Release of signal peptides from bacterial membrane prolipoproteins. Hydrolyzes -Xaa-Yaa-Zaa-|-(S,diacylglyceryl)Cys-, in which Xaa is hydrophobic (preferably Leu), and Yaa (Ala or Ser) and Zaa (Gly or Ala) have small, neutral side chains.. It participates in protein modification; lipoprotein biosynthesis (signal peptide cleavage). Its function is as follows. This protein specifically catalyzes the removal of signal peptides from prolipoproteins. The chain is Lipoprotein signal peptidase from Xylella fastidiosa (strain M23).